The chain runs to 404 residues: Argininosuccinate synthase (404 aa).

ATP is bound by residues 10–18 and A38; that span reads AYSGGVDTS. Y89 is a binding site for L-citrulline. G119 is a binding site for ATP. Positions 121, 125, and 126 each coordinate L-aspartate. Residue N125 participates in L-citrulline binding. L-citrulline is bound by residues R129, S177, S186, E262, and Y274.

Belongs to the argininosuccinate synthase family. Type 1 subfamily. As to quaternary structure, homotetramer.

Its subcellular location is the cytoplasm. It carries out the reaction L-citrulline + L-aspartate + ATP = 2-(N(omega)-L-arginino)succinate + AMP + diphosphate + H(+). The protein operates within amino-acid biosynthesis; L-arginine biosynthesis; L-arginine from L-ornithine and carbamoyl phosphate: step 2/3. This Prochlorococcus marinus (strain MIT 9312) protein is Argininosuccinate synthase.